Reading from the N-terminus, the 918-residue chain is Chaperone protein ClpC1, chloroplastic (918 aa).

The region spanning 88 to 230 is the Clp R domain; that stretch reads FERFTEKAIK…RTQVIRMVGE (143 aa). Repeat stretches follow at residues 91-156 and 166-230; these read FTEK…IGRG and FTPR…MVGE. Positions 251-498 are i; it reads LEEYGTNLTK…RVRLRHAQLP (248 aa). 296-303 is an ATP binding site; the sequence is GEPGVGKT. The UVR domain maps to 505–540; that stretch reads DKELRQVTKDKNEAVRGQDFEKAGELRDREMELKAQ. Residues 565–756 are II; it reads VTEADIQHIV…LLIMTSNVGS (192 aa). ATP is bound at residue 639 to 646; that stretch reads GPTGVGKS.

This sequence belongs to the ClpA/ClpB family. ClpC subfamily. As to expression, widely expressed.

The protein resides in the plastid. It is found in the chloroplast. Its function is as follows. Molecular chaperone that may interact with a ClpP-like protease involved in degradation of denatured proteins in the chloroplast. In Oryza sativa subsp. japonica (Rice), this protein is Chaperone protein ClpC1, chloroplastic (CLPC1).